The primary structure comprises 513 residues: NADH-quinone oxidoreductase chain 13 (513 aa).

14 consecutive transmembrane segments (helical) span residues 3–23, 34–54, 81–101, 112–132, 133–153, 164–184, 211–231, 250–270, 277–297, 312–332, 340–360, 383–403, 418–438, and 463–483; these read NLLSIITFLPIVAAIIMALFL, AKWLALLTTTATFVISLFVLF, VDGISVLFVLLTTFMMPLTIL, EYMIAFLVLEGLMIGVFTALD, LVLFYLFFEAGLIPMFLIIGI, FKFFLYTFLGSVLMLVAMIAM, MTVVGGMQMLLFLAFFASFAV, PTAGSVLLAAVLLKMGGYGFL, FPVASGVAQPYVFWLSAIAIV, VIAYSSVAHMGYVTMGVFAAN, IFQMLSHGFISGALFLCVGVI, AAVFMFFTMANVGLPGTSGFV, WVALVATSGVILSAAYALWLY, and WVFIPLIAMTLILGVYPRLVT.

It belongs to the complex I subunit 4 family. In terms of assembly, NDH-1 is composed of at least 14 different subunits, Nqo1 to Nqo14. The complex has a L-shaped structure, with the hydrophobic arm (subunits Nqo7, Nqo8, Nqo10 to Nqo14) embedded in the inner membrane and the hydrophilic peripheral arm (subunits Nqo1 to Nqo6, Nqo9) protruding into the bacterial cytoplasm. The hydrophilic domain contains all the redox centers.

It localises to the cell inner membrane. The enzyme catalyses a quinone + NADH + 5 H(+)(in) = a quinol + NAD(+) + 4 H(+)(out). Its function is as follows. NDH-1 shuttles electrons from NADH, via FMN and iron-sulfur (Fe-S) centers, to quinones in the respiratory chain. The immediate electron acceptor for the enzyme in this species is believed to be ubiquinone. Couples the redox reaction to proton translocation (for every two electrons transferred, four hydrogen ions are translocated across the cytoplasmic membrane), and thus conserves the redox energy in a proton gradient. This chain is NADH-quinone oxidoreductase chain 13, found in Paracoccus denitrificans.